Consider the following 336-residue polypeptide: Aspartate--ammonia ligase (336 aa).

Belongs to the class-II aminoacyl-tRNA synthetase family. AsnA subfamily.

It is found in the cytoplasm. The catalysed reaction is L-aspartate + NH4(+) + ATP = L-asparagine + AMP + diphosphate + H(+). The protein operates within amino-acid biosynthesis; L-asparagine biosynthesis; L-asparagine from L-aspartate (ammonia route): step 1/1. In Clostridium perfringens (strain ATCC 13124 / DSM 756 / JCM 1290 / NCIMB 6125 / NCTC 8237 / Type A), this protein is Aspartate--ammonia ligase.